Here is a 476-residue protein sequence, read N- to C-terminus: Probable cytosolic Fe-S cluster assembly factor GI11683 (476 aa).

The [4Fe-4S] cluster site is built by C23, C68, C71, C74, C187, C243, C395, and C399.

The protein belongs to the NARF family.

Component of the cytosolic iron-sulfur (Fe/S) protein assembly machinery. Required for maturation of extramitochondrial Fe/S proteins. The protein is Probable cytosolic Fe-S cluster assembly factor GI11683 of Drosophila mojavensis (Fruit fly).